We begin with the raw amino-acid sequence, 264 residues long: 3-deoxy-manno-octulosonate cytidylyltransferase (264 aa).

This sequence belongs to the KdsB family.

It is found in the cytoplasm. The catalysed reaction is 3-deoxy-alpha-D-manno-oct-2-ulosonate + CTP = CMP-3-deoxy-beta-D-manno-octulosonate + diphosphate. Its pathway is nucleotide-sugar biosynthesis; CMP-3-deoxy-D-manno-octulosonate biosynthesis; CMP-3-deoxy-D-manno-octulosonate from 3-deoxy-D-manno-octulosonate and CTP: step 1/1. It participates in bacterial outer membrane biogenesis; lipopolysaccharide biosynthesis. Activates KDO (a required 8-carbon sugar) for incorporation into bacterial lipopolysaccharide in Gram-negative bacteria. The chain is 3-deoxy-manno-octulosonate cytidylyltransferase from Methylibium petroleiphilum (strain ATCC BAA-1232 / LMG 22953 / PM1).